The chain runs to 128 residues: uncharacterized protein (128 aa).

This is an uncharacterized protein from Mycoplasma genitalium (strain ATCC 33530 / DSM 19775 / NCTC 10195 / G37) (Mycoplasmoides genitalium).